The chain runs to 462 residues: 3-ketoacyl-CoA thiolase 2, peroxisomal (462 aa).

The N-terminal 34 residues, methionine 1 to cysteine 34, are a transit peptide targeting the peroxisome. Residue cysteine 138 is the Acyl-thioester intermediate of the active site. Cysteine 138 and cysteine 192 form a disulfide bridge. Residues histidine 393 and cysteine 425 each act as proton acceptor in the active site.

This sequence belongs to the thiolase-like superfamily. Thiolase family. In terms of assembly, forms homodimers. In terms of tissue distribution, accumulates in etiolated cotyledons and in seedlings, also present in roots, flowers and siliques (at protein level). High levels in wounded leaves.

Its subcellular location is the peroxisome. The protein resides in the glyoxysome. It carries out the reaction an acyl-CoA + acetyl-CoA = a 3-oxoacyl-CoA + CoA. The protein operates within lipid metabolism; fatty acid metabolism. Functionally, involved in long chain fatty-acid beta-oxidation prior to gluconeogenesis during germination and subsequent seedling growth. Confers sensitivity to 2,4-dichlorophenoxybutiric acid (2,4-DB). Required for local and systemic induction of jasmonic acid (JA) biosynthesis after wounding. Seems to be involved in JA biosynthesis during senescence. May be involved in the positive regulation of abscisic acid-activated signaling pathway. The sequence is that of 3-ketoacyl-CoA thiolase 2, peroxisomal (PED1) from Arabidopsis thaliana (Mouse-ear cress).